A 114-amino-acid polypeptide reads, in one-letter code: Ribonuclease P protein component (114 aa).

Belongs to the RnpA family. In terms of assembly, consists of a catalytic RNA component (M1 or rnpB) and a protein subunit.

It carries out the reaction Endonucleolytic cleavage of RNA, removing 5'-extranucleotides from tRNA precursor.. RNaseP catalyzes the removal of the 5'-leader sequence from pre-tRNA to produce the mature 5'-terminus. It can also cleave other RNA substrates such as 4.5S RNA. The protein component plays an auxiliary but essential role in vivo by binding to the 5'-leader sequence and broadening the substrate specificity of the ribozyme. In Lactiplantibacillus plantarum (strain ATCC BAA-793 / NCIMB 8826 / WCFS1) (Lactobacillus plantarum), this protein is Ribonuclease P protein component.